The chain runs to 177 residues: Large ribosomal subunit protein uL6 (177 aa).

It belongs to the universal ribosomal protein uL6 family. Part of the 50S ribosomal subunit.

This protein binds to the 23S rRNA, and is important in its secondary structure. It is located near the subunit interface in the base of the L7/L12 stalk, and near the tRNA binding site of the peptidyltransferase center. This Marinomonas sp. (strain MWYL1) protein is Large ribosomal subunit protein uL6.